Reading from the N-terminus, the 246-residue chain is UPF0246 protein stu1967 (246 aa).

It belongs to the UPF0246 family.

The sequence is that of UPF0246 protein stu1967 from Streptococcus thermophilus (strain ATCC BAA-250 / LMG 18311).